Reading from the N-terminus, the 267-residue chain is NAD kinase 2 (267 aa).

Catalysis depends on D52, which acts as the Proton acceptor. NAD(+) is bound by residues 52–53, 124–125, R151, D153, 164–169, and A188; these read DG, NE, and TAYNKS.

This sequence belongs to the NAD kinase family. Requires a divalent metal cation as cofactor.

The protein resides in the cytoplasm. It carries out the reaction NAD(+) + ATP = ADP + NADP(+) + H(+). Its function is as follows. Involved in the regulation of the intracellular balance of NAD and NADP, and is a key enzyme in the biosynthesis of NADP. Catalyzes specifically the phosphorylation on 2'-hydroxyl of the adenosine moiety of NAD to yield NADP. In Bacillus subtilis (strain 168), this protein is NAD kinase 2.